The chain runs to 190 residues: Putative manganese efflux pump MntP (190 aa).

The next 6 membrane-spanning stretches (helical) occupy residues isoleucine 6–isoleucine 26, phenylalanine 36–phenylalanine 56, phenylalanine 61–glycine 81, leucine 108–isoleucine 128, isoleucine 138–phenylalanine 158, and leucine 169–leucine 189.

This sequence belongs to the MntP (TC 9.B.29) family.

It localises to the cell inner membrane. Probably functions as a manganese efflux pump. The chain is Putative manganese efflux pump MntP from Phocaeicola vulgatus (strain ATCC 8482 / DSM 1447 / JCM 5826 / CCUG 4940 / NBRC 14291 / NCTC 11154) (Bacteroides vulgatus).